The sequence spans 709 residues: Elongation factor G (709 aa).

The region spanning 10 to 286 is the tr-type G domain; the sequence is NKVRNIGIMA…AVVDFLPSPL (277 aa). GTP-binding positions include 19–26, 83–87, and 137–140; these read AHIDAGKT, DTPGH, and NKMD.

It belongs to the TRAFAC class translation factor GTPase superfamily. Classic translation factor GTPase family. EF-G/EF-2 subfamily.

It localises to the cytoplasm. Catalyzes the GTP-dependent ribosomal translocation step during translation elongation. During this step, the ribosome changes from the pre-translocational (PRE) to the post-translocational (POST) state as the newly formed A-site-bound peptidyl-tRNA and P-site-bound deacylated tRNA move to the P and E sites, respectively. Catalyzes the coordinated movement of the two tRNA molecules, the mRNA and conformational changes in the ribosome. This chain is Elongation factor G, found in Corynebacterium glutamicum (strain R).